Consider the following 372-residue polypeptide: Anhydro-N-acetylmuramic acid kinase (372 aa).

Gly-21–Asp-28 is an ATP binding site.

It belongs to the anhydro-N-acetylmuramic acid kinase family.

The enzyme catalyses 1,6-anhydro-N-acetyl-beta-muramate + ATP + H2O = N-acetyl-D-muramate 6-phosphate + ADP + H(+). It functions in the pathway amino-sugar metabolism; 1,6-anhydro-N-acetylmuramate degradation. The protein operates within cell wall biogenesis; peptidoglycan recycling. Its function is as follows. Catalyzes the specific phosphorylation of 1,6-anhydro-N-acetylmuramic acid (anhMurNAc) with the simultaneous cleavage of the 1,6-anhydro ring, generating MurNAc-6-P. Is required for the utilization of anhMurNAc either imported from the medium or derived from its own cell wall murein, and thus plays a role in cell wall recycling. The polypeptide is Anhydro-N-acetylmuramic acid kinase (Bordetella avium (strain 197N)).